Consider the following 176-residue polypeptide: Deoxyuridine 5'-triphosphate nucleotidohydrolase (176 aa).

Substrate contacts are provided by residues 67 to 69 (RSG), Asn-80, 84 to 86 (TVD), and Lys-94. Positions 141 to 176 (GGFGSTGGHASVDGAEGGITHGGNSYASVVSDREGQ) are disordered.

This sequence belongs to the dUTPase family. It depends on Mg(2+) as a cofactor.

The catalysed reaction is dUTP + H2O = dUMP + diphosphate + H(+). The protein operates within pyrimidine metabolism; dUMP biosynthesis; dUMP from dCTP (dUTP route): step 2/2. In terms of biological role, this enzyme is involved in nucleotide metabolism: it produces dUMP, the immediate precursor of thymidine nucleotides and it decreases the intracellular concentration of dUTP so that uracil cannot be incorporated into DNA. The sequence is that of Deoxyuridine 5'-triphosphate nucleotidohydrolase from Streptomyces griseus subsp. griseus (strain JCM 4626 / CBS 651.72 / NBRC 13350 / KCC S-0626 / ISP 5235).